The chain runs to 225 residues: Protein-L-isoaspartate O-methyltransferase (225 aa).

Residue serine 75 is part of the active site.

This sequence belongs to the methyltransferase superfamily. L-isoaspartyl/D-aspartyl protein methyltransferase family.

It localises to the cytoplasm. The catalysed reaction is [protein]-L-isoaspartate + S-adenosyl-L-methionine = [protein]-L-isoaspartate alpha-methyl ester + S-adenosyl-L-homocysteine. In terms of biological role, catalyzes the methyl esterification of L-isoaspartyl residues in peptides and proteins that result from spontaneous decomposition of normal L-aspartyl and L-asparaginyl residues. It plays a role in the repair and/or degradation of damaged proteins. This chain is Protein-L-isoaspartate O-methyltransferase, found in Stenotrophomonas maltophilia (strain K279a).